A 240-amino-acid polypeptide reads, in one-letter code: Ribonuclease HII (240 aa).

One can recognise an RNase H type-2 domain in the interval 31-222 (RLIAGVDEAG…VRRALGLETA (192 aa)). Residues aspartate 37, glutamate 38, and aspartate 130 each contribute to the a divalent metal cation site.

It belongs to the RNase HII family. Mn(2+) serves as cofactor. Mg(2+) is required as a cofactor.

It is found in the cytoplasm. The enzyme catalyses Endonucleolytic cleavage to 5'-phosphomonoester.. Endonuclease that specifically degrades the RNA of RNA-DNA hybrids. This chain is Ribonuclease HII, found in Xanthomonas campestris pv. campestris (strain B100).